The following is a 390-amino-acid chain: MTSALEAIRYKRGHLLIIDQLLLPHVTRFIPIRSAEDGWHSIKEMHVRGAPAIAIVAMLSLAVEMSGLVSQQKISKNAEDTRVYIEEKLDYLATSRPTAVNLSDSVRKMKSVLEQKTRTLTCSGEEIAMSFIAYAENMLVHDVADNRSIGEHGANWIVANTPSGVEDSKLCILTHCNTGSLATAGYGTALGIIRHLHEKSQLCHAYCTETRPYNQGARLTAYELVSDQIPATLITDSMAGQLLAKMGQSIAAIVVGADRVASNGDTANKIGTYTLAVLAKYHGVKFVVAAPRTTIDMGTRTGKDIVIEERPHSEVTTITGPRERGDECGNIVMENIKIAADGINVWNPAFDVTPAALIDAIVTEKGVEVKDANGRFHLGSLFETEVRPSN.

Catalysis depends on D258, which acts as the Proton donor.

The protein belongs to the eIF-2B alpha/beta/delta subunits family. MtnA subfamily.

The protein resides in the cytoplasm. Its subcellular location is the nucleus. The catalysed reaction is 5-(methylsulfanyl)-alpha-D-ribose 1-phosphate = 5-(methylsulfanyl)-D-ribulose 1-phosphate. It participates in amino-acid biosynthesis; L-methionine biosynthesis via salvage pathway; L-methionine from S-methyl-5-thio-alpha-D-ribose 1-phosphate: step 1/6. Its function is as follows. Catalyzes the interconversion of methylthioribose-1-phosphate (MTR-1-P) into methylthioribulose-1-phosphate (MTRu-1-P). This is Methylthioribose-1-phosphate isomerase from Coccidioides posadasii (strain C735) (Valley fever fungus).